We begin with the raw amino-acid sequence, 328 residues long: Pantothenate kinase (328 aa).

Residues 1–12 (MAAPLNAQTRAP) are compositionally biased toward polar residues. The disordered stretch occupies residues 1–22 (MAAPLNAQTRAPQATGRAPDFS). 113–120 (GSVAVGKS) serves as a coordination point for ATP.

Belongs to the prokaryotic pantothenate kinase family.

It localises to the cytoplasm. It catalyses the reaction (R)-pantothenate + ATP = (R)-4'-phosphopantothenate + ADP + H(+). Its pathway is cofactor biosynthesis; coenzyme A biosynthesis; CoA from (R)-pantothenate: step 1/5. The sequence is that of Pantothenate kinase from Corynebacterium efficiens (strain DSM 44549 / YS-314 / AJ 12310 / JCM 11189 / NBRC 100395).